Reading from the N-terminus, the 252-residue chain is Carbohydrate deacetylase (252 aa).

Residues His-59 and His-122 each coordinate Mg(2+).

This sequence belongs to the YdjC deacetylase family. As to quaternary structure, homodimer. The cofactor is Mg(2+).

Probably catalyzes the deacetylation of acetylated carbohydrates an important step in the degradation of oligosaccharides. This Vibrio vulnificus (strain YJ016) protein is Carbohydrate deacetylase.